A 169-amino-acid polypeptide reads, in one-letter code: Fumarase E (169 aa).

It belongs to the MtlR/FumE family. Homodimer.

It catalyses the reaction (S)-malate = fumarate + H2O. In vitro catalyzes the addition of water to fumarate, forming malate. Cannot catalyze the reverse reaction. Cannot use the cis-isomer maleate as substrate. The polypeptide is Fumarase E (Shigella flexneri).